The sequence spans 199 residues: Interleukin-11 (199 aa).

Positions 1–21 are cleaved as a signal peptide; sequence MNCVCRLVLVVLSLWPDTAVA. An important for interaction with IL11RA and for the stimulation of cell proliferation region spans residues 182-190; that stretch reads HLTLDWAVR.

It belongs to the IL-6 superfamily. As to quaternary structure, interacts with IL11RA to associate with IL6ST, giving rise to a multimeric signaling complex.

It is found in the secreted. Functionally, cytokine that stimulates the proliferation of hematopoietic stem cells and megakaryocyte progenitor cells and induces megakaryocyte maturation resulting in increased platelet production. Also promotes the proliferation of hepatocytes in response to liver damage. Binding to its receptor formed by IL6ST and IL11RA activates a signaling cascade that promotes cell proliferation. Signaling leads to the activation of intracellular protein kinases and the phosphorylation of STAT3. The interaction with the membrane-bound IL11RA and IL6ST stimulates 'classic signaling', whereas the binding of IL11 and soluble IL11RA to IL6ST stimulates 'trans-signaling'. This is Interleukin-11 from Homo sapiens (Human).